Here is a 437-residue protein sequence, read N- to C-terminus: Pterin deaminase (437 aa).

A divalent metal cation contacts are provided by His80 and His82. Lys85 is a binding site for substrate. His231 provides a ligand contact to a divalent metal cation. Glu234 (proton donor) is an active-site residue. Asp331 is an a divalent metal cation binding site. 331 to 332 (DN) lines the substrate pocket.

Belongs to the metallo-dependent hydrolases superfamily. Pterin deaminase family. Requires a divalent metal cation as cofactor.

It catalyses the reaction a 2-amino-4-hydroxypteridine + H2O + H(+) = a 2,4-dihydroxypteridine + NH4(+). It carries out the reaction L-sepiapterin + H2O + H(+) = (S)-xanthopterin-B2 + NH4(+). Functionally, catalyzes the deamination of many pterin metabolites, such as formylpterin, pterin-6-carboxylate, pterin-7-carboxylate, pterin, hydroxymethylpterin, biopterin, D-(+)-neopterin, isoxanthopterin, sepiapterin, folate, xanthopterin, and 7,8-dihydrohydroxymethylpterin. May be involved in a degradative pathway for catabolizing pterin rings. The sequence is that of Pterin deaminase from Rhizobium rhizogenes (strain K84 / ATCC BAA-868) (Agrobacterium radiobacter).